A 205-amino-acid polypeptide reads, in one-letter code: Ribosomal RNA small subunit methyltransferase J (205 aa).

Residues 56 to 57, 72 to 73, and Asp-124 each bind S-adenosyl-L-methionine; these read RD and ER.

This sequence belongs to the methyltransferase superfamily. RsmJ family.

It is found in the cytoplasm. It catalyses the reaction guanosine(1516) in 16S rRNA + S-adenosyl-L-methionine = N(2)-methylguanosine(1516) in 16S rRNA + S-adenosyl-L-homocysteine + H(+). Its function is as follows. Specifically methylates the guanosine in position 1516 of 16S rRNA. The chain is Ribosomal RNA small subunit methyltransferase J from Brucella anthropi (strain ATCC 49188 / DSM 6882 / CCUG 24695 / JCM 21032 / LMG 3331 / NBRC 15819 / NCTC 12168 / Alc 37) (Ochrobactrum anthropi).